The sequence spans 717 residues: Proline-rich receptor-like protein kinase PERK2 (717 aa).

The segment covering 1-197 has biased composition (pro residues); it reads MSSAPPPGGT…GSLSPPPPAS (197 aa). The segment at 1-221 is disordered; sequence MSSAPPPGGT…GSSPPAQSSK (221 aa). The Extracellular segment spans residues 1–228; sequence MSSAPPPGGT…SSKELSKGAM (228 aa). The span at 198 to 220 shows a compositional bias: low complexity; that stretch reads PSGGRSPSTPSTTPGSSPPAQSS. Residues 229-249 form a helical membrane-spanning segment; that stretch reads VGIAIGGGFVLLVALALIFFL. The Cytoplasmic segment spans residues 250–717; the sequence is CKKKRRRDNE…NIKRPGQGYG (468 aa). The tract at residues 258–323 is disordered; sequence NEAPPAPIDG…YDSNYSDQSV (66 aa). Pro residues predominate over residues 289 to 303; that stretch reads VPPPKSPSSAPPRPP. The segment covering 307 to 322 has biased composition (low complexity); it reads SSGSSGDYDSNYSDQS. The region spanning 354 to 631 is the Protein kinase domain; that stretch reads FSEANLLGQG…QVARVLEGNI (278 aa). Residues 360 to 368 and Lys-382 contribute to the ATP site; that span reads LGQGGFGYV. Asp-478 serves as the catalytic Proton acceptor. Composition is skewed to polar residues over residues 632 to 644 and 692 to 705; these read SPSD…TPGH and SWSS…QGKA. Disordered regions lie at residues 632-665 and 690-717; these read SPSD…DNEG and YPSW…QGYG.

The protein belongs to the protein kinase superfamily. Ser/Thr protein kinase family. In terms of tissue distribution, mostly expressed in inflorescence bolt, flower buds and siliques, and, to a lower extent, in roots, seedlings and leaves.

The protein localises to the cell membrane. It carries out the reaction L-seryl-[protein] + ATP = O-phospho-L-seryl-[protein] + ADP + H(+). It catalyses the reaction L-threonyl-[protein] + ATP = O-phospho-L-threonyl-[protein] + ADP + H(+). This is Proline-rich receptor-like protein kinase PERK2 (PERK2) from Arabidopsis thaliana (Mouse-ear cress).